A 478-amino-acid chain; its full sequence is MAGVEQAASFGGHLNGDLDPDDREEGTSSTAEEAAKKKRRKKKKGKGAVSAVQQELDKESGALVDEVAKQLESQALEEKERDDDDEDGDGDADGATGKKKKKKKKKRGPKVQTDPPSVPICDLYPNGVFPKGQECEYPPTQDGRTAAWRTTSEEKKALDQASEEIWNDFREAAEAHRQVRKYVMSWIKPGMTMIEICEKLEDCSRKLIKENGLNAGLAFPTGCSLNNCAAHYTPNAGDTTVLQYDDICKIDFGTHISGRIIDCAFTVTFNPKYDILLTAVKDATNTGIKCAGIDVRLCDVGEAIQEVMESYEVEIDGKTYQVKPIRNLNGHSIGPYRIHAGKTVPIVKGGEATRMEEGEVYAIETFGSTGKGVVHDDMECSHYMKNFDVGHVPIRLPRTKHLLNVINENFGTLAFCRRWLDRLGESKYLMALKNLCDLGIVDPYPPLCDIKGSYTAQFEHTILLRPTCKEVVSRGDDY.

The segment at 1-122 (MAGVEQAASF…TDPPSVPICD (122 aa)) is disordered. An N-acetylalanine modification is found at Ala2. The segment covering 36–46 (KKKRRKKKKGK) has biased composition (basic residues). Phosphoserine; alternate is present on Ser60. O-linked (GlcNAc) serine; alternate glycosylation occurs at Ser60. Over residues 80–92 (ERDDDDEDGDGDA) the composition is skewed to acidic residues. Basic residues predominate over residues 97–109 (GKKKKKKKKKRGP). His231 is a substrate binding site. A divalent metal cation-binding residues include Asp251, Asp262, and His331. A substrate-binding site is contributed by His339. A divalent metal cation-binding residues include Glu364 and Glu459.

This sequence belongs to the peptidase M24A family. Methionine aminopeptidase eukaryotic type 2 subfamily. In terms of assembly, binds EIF2S1 at low magnesium concentrations. Interacts strongly with the eIF-2 gamma-subunit EIF2S3. Co(2+) is required as a cofactor. Zn(2+) serves as cofactor. It depends on Mn(2+) as a cofactor. The cofactor is Fe(2+). Contains approximately 12 O-linked N-acetylglucosamine (GlcNAc) residues. O-glycosylation is required for EIF2S1 binding.

The protein resides in the cytoplasm. It catalyses the reaction Release of N-terminal amino acids, preferentially methionine, from peptides and arylamides.. Cotranslationally removes the N-terminal methionine from nascent proteins. The N-terminal methionine is often cleaved when the second residue in the primary sequence is small and uncharged (Met-Ala-, Cys, Gly, Pro, Ser, Thr, or Val). Functionally, protects eukaryotic initiation factor EIF2S1 from translation-inhibiting phosphorylation by inhibitory kinases such as EIF2AK2/PKR and EIF2AK1/HCR. Plays a critical role in the regulation of protein synthesis. The chain is Methionine aminopeptidase 2 (Metap2) from Mus musculus (Mouse).